Here is a 420-residue protein sequence, read N- to C-terminus: Acyl-coenzyme A amino acid N-acyltransferase 2 (420 aa).

Active-site charge relay system residues include Ser-235, Asp-329, and His-363. The Microbody targeting signal motif lies at 418–420; that stretch reads SKL.

It belongs to the C/M/P thioester hydrolase family.

It is found in the peroxisome. Acyltransferase which efficiently conjugates very long-chain and long-chain fatty acids to taurine. Shows no conjugation activity in the presence of glycine. This is Acyl-coenzyme A amino acid N-acyltransferase 2 from Mus musculus (Mouse).